The following is a 304-amino-acid chain: UDP-3-O-acyl-N-acetylglucosamine deacetylase (304 aa).

Positions 78, 237, and 241 each coordinate Zn(2+). Catalysis depends on His-264, which acts as the Proton donor.

Belongs to the LpxC family. Zn(2+) serves as cofactor.

It carries out the reaction a UDP-3-O-[(3R)-3-hydroxyacyl]-N-acetyl-alpha-D-glucosamine + H2O = a UDP-3-O-[(3R)-3-hydroxyacyl]-alpha-D-glucosamine + acetate. It participates in glycolipid biosynthesis; lipid IV(A) biosynthesis; lipid IV(A) from (3R)-3-hydroxytetradecanoyl-[acyl-carrier-protein] and UDP-N-acetyl-alpha-D-glucosamine: step 2/6. Its function is as follows. Catalyzes the hydrolysis of UDP-3-O-myristoyl-N-acetylglucosamine to form UDP-3-O-myristoylglucosamine and acetate, the committed step in lipid A biosynthesis. The sequence is that of UDP-3-O-acyl-N-acetylglucosamine deacetylase from Xylella fastidiosa (strain 9a5c).